A 211-amino-acid chain; its full sequence is Large ribosomal subunit protein uL3 (211 aa).

Belongs to the universal ribosomal protein uL3 family. Part of the 50S ribosomal subunit. Forms a cluster with proteins L14 and L19.

Functionally, one of the primary rRNA binding proteins, it binds directly near the 3'-end of the 23S rRNA, where it nucleates assembly of the 50S subunit. This is Large ribosomal subunit protein uL3 from Trichlorobacter lovleyi (strain ATCC BAA-1151 / DSM 17278 / SZ) (Geobacter lovleyi).